We begin with the raw amino-acid sequence, 457 residues long: tRNA-2-methylthio-N(6)-dimethylallyladenosine synthase (457 aa).

The MTTase N-terminal domain maps to Lys-2–Arg-119. 6 residues coordinate [4Fe-4S] cluster: Cys-11, Cys-48, Cys-82, Cys-156, Cys-160, and Cys-163. One can recognise a Radical SAM core domain in the interval Arg-142–Arg-375. One can recognise a TRAM domain in the interval Glu-378–Glu-448.

Belongs to the methylthiotransferase family. MiaB subfamily. As to quaternary structure, monomer. The cofactor is [4Fe-4S] cluster.

It localises to the cytoplasm. The enzyme catalyses N(6)-dimethylallyladenosine(37) in tRNA + (sulfur carrier)-SH + AH2 + 2 S-adenosyl-L-methionine = 2-methylsulfanyl-N(6)-dimethylallyladenosine(37) in tRNA + (sulfur carrier)-H + 5'-deoxyadenosine + L-methionine + A + S-adenosyl-L-homocysteine + 2 H(+). Functionally, catalyzes the methylthiolation of N6-(dimethylallyl)adenosine (i(6)A), leading to the formation of 2-methylthio-N6-(dimethylallyl)adenosine (ms(2)i(6)A) at position 37 in tRNAs that read codons beginning with uridine. This chain is tRNA-2-methylthio-N(6)-dimethylallyladenosine synthase, found in Ralstonia nicotianae (strain ATCC BAA-1114 / GMI1000) (Ralstonia solanacearum).